The chain runs to 301 residues: ADP-ribosyl cyclase/cyclic ADP-ribose hydrolase 1 (301 aa).

Residues 1 to 21 are Cytoplasmic-facing; it reads MANCEFSPVSGDKPCCRLSRR. The chain crosses the membrane as a helical; Signal-anchor for type II membrane protein span at residues 22-43; the sequence is AQVCLGVCLLVLLILVVVVAVV. Residues 44–301 lie on the Extracellular side of the membrane; it reads LPRWRQQWSG…PEDSSCLSGI (258 aa). 3 cysteine pairs are disulfide-bonded: Cys-68/Cys-83, Cys-100/Cys-181, and Cys-161/Cys-174. The N-linked (GlcNAc...) asparagine glycan is linked to Asn-101. Residue Cys-120 is part of the active site. Residue Asn-121 is glycosylated (N-linked (GlcNAc...) asparagine). Cys-202 is a catalytic residue. Asn-210 and Asn-220 each carry an N-linked (GlcNAc...) asparagine glycan. Cystine bridges form between Cys-255–Cys-276 and Cys-288–Cys-297.

Belongs to the ADP-ribosyl cyclase family. As to quaternary structure, homodimer.

It localises to the cell surface. It is found in the membrane. The catalysed reaction is NAD(+) = cyclic ADP-beta-D-ribose + nicotinamide + H(+). It catalyses the reaction 2'-phospho-cyclic ADP-ribose + nicotinate = nicotinate-adenine dinucleotide phosphate. It carries out the reaction NAD(+) + H2O = ADP-D-ribose + nicotinamide + H(+). The enzyme catalyses nicotinate + NADP(+) = nicotinate-adenine dinucleotide phosphate + nicotinamide. Its activity is regulated as follows. ATP inhibits the cADPR hydrolyzing activity. Synthesizes cyclic ADP-ribose (cADPR), a second messenger for glucose-induced insulin secretion. Synthesizes the Ca(2+) mobilizer nicotinate-adenine dinucleotide phosphate, NAADP(+), from 2'-phospho-cADPR and nicotinic acid, as well as from NADP(+) and nicotinic acid. Also has cADPR hydrolase activity. This chain is ADP-ribosyl cyclase/cyclic ADP-ribose hydrolase 1 (CD38), found in Macaca fascicularis (Crab-eating macaque).